The sequence spans 227 residues: [D-Ala2]-deltorphins (227 aa).

The signal sequence occupies residues 1–20 (MSFLKKSLLLVLFLGLVSHS). A propeptide spanning residues 21-46 (VCKEEKRETEEENENEEENHEVGSEM) is cleaved from the precursor. The segment at 22–227 (CKEEKRETEE…DVVGGEAKKM (206 aa)) is disordered. Residues 30 to 39 (EEENENEEEN) show a composition bias toward acidic residues. A50 carries the post-translational modification D-alanine (Ala). The propeptide occupies 57 to 75 (DTEEKNENEEENQEEGSEM). Over residues 62–72 (NENEEENQEEG) the composition is skewed to acidic residues. Residues 73–87 (SEMKRYAFGYPKREP) are compositionally biased toward basic and acidic residues. A79 is subject to D-alanine (Ala). A propeptide spanning residues 86–104 (EPEEENENEEENHEEGSEM) is cleaved from the precursor. The segment covering 88-98 (EEENENEEENH) has biased composition (acidic residues). Basic and acidic residues predominate over residues 99-108 (EEGSEMKRYA). D-alanine (Ala) is present on A108. At G113 the chain carries Glycine amide. Residues 115–140 (EAKKMKREPEEENENEEENHEEGSEM) constitute a propeptide that is removed on maturation. The segment covering 124–134 (EEENENEEENH) has biased composition (acidic residues). Residues 135-144 (EEGSEMKRYA) show a composition bias toward basic and acidic residues. A144 is subject to D-alanine (Ala). Glycine amide is present on G149. Positions 151–176 (EAKKMKREPEEENENEEENHEEGSEM) are excised as a propeptide. Acidic residues predominate over residues 160-170 (EEENENEEENH). The span at 171 to 180 (EEGSEMKRYA) shows a compositional bias: basic and acidic residues. A180 carries the post-translational modification D-alanine (Ala). At G185 the chain carries Glycine amide. The propeptide occupies 187–212 (EAKKMKREPEEENENEEENHEEGSEM). The span at 196–206 (EEENENEEENH) shows a compositional bias: acidic residues. Basic and acidic residues predominate over residues 207-216 (EEGSEMKRYA). D-alanine (Ala) is present on A216. G221 is modified (glycine amide). Positions 223-227 (EAKKM) are excised as a propeptide.

The protein belongs to the frog skin active peptide (FSAP) family. Dermorphin subfamily. In terms of tissue distribution, expressed by the skin glands.

The protein resides in the secreted. Its function is as follows. Deltorphin is a heptapeptide with a very potent opiate-like activity. Has high affinity and selectivity for delta-type opioid receptors. The two dermorphin-like peptides have a similar affinity and selectivity for the mu opioid receptor as dermorphin. The sequence is that of [D-Ala2]-deltorphins from Phyllomedusa bicolor (Two-colored leaf frog).